A 347-amino-acid polypeptide reads, in one-letter code: S-adenosylmethionine:tRNA ribosyltransferase-isomerase (347 aa).

The protein belongs to the QueA family. In terms of assembly, monomer.

Its subcellular location is the cytoplasm. It catalyses the reaction 7-aminomethyl-7-carbaguanosine(34) in tRNA + S-adenosyl-L-methionine = epoxyqueuosine(34) in tRNA + adenine + L-methionine + 2 H(+). The protein operates within tRNA modification; tRNA-queuosine biosynthesis. Transfers and isomerizes the ribose moiety from AdoMet to the 7-aminomethyl group of 7-deazaguanine (preQ1-tRNA) to give epoxyqueuosine (oQ-tRNA). This is S-adenosylmethionine:tRNA ribosyltransferase-isomerase from Xylella fastidiosa (strain 9a5c).